The following is a 362-amino-acid chain: 3-dehydroquinate synthase (362 aa).

Belongs to the archaeal-type DHQ synthase family.

It carries out the reaction 2-amino-2,3,7-trideoxy-D-lyxo-hept-6-ulosonate + NAD(+) + H2O = 3-dehydroquinate + NH4(+) + NADH + H(+). Its function is as follows. Catalyzes the oxidative deamination and cyclization of 2-amino-3,7-dideoxy-D-threo-hept-6-ulosonic acid (ADH) to yield 3-dehydroquinate (DHQ), which is fed into the canonical shikimic pathway of aromatic amino acid biosynthesis. The chain is 3-dehydroquinate synthase from Methanococcus aeolicus (strain ATCC BAA-1280 / DSM 17508 / OCM 812 / Nankai-3).